Consider the following 417-residue polypeptide: Brevican core protein (417 aa).

A signal peptide spans 1 to 22 (MAPLFLPLLIALALAPGPTASA). An Ig-like V-type domain is found at 23 to 155 (DVLEGDSSED…SSDAVEVKVK (133 aa)). Cystine bridges form between cysteine 57-cysteine 137, cysteine 179-cysteine 250, and cysteine 203-cysteine 224. N-linked (GlcNAc...) asparagine glycosylation is present at asparagine 130. Link domains are found at residues 157 to 252 (VVFL…YCYA) and 257 to 354 (GELF…YCFR). N-linked (GlcNAc...) asparagine glycosylation occurs at asparagine 267. 2 disulfide bridges follow: cysteine 277–cysteine 352 and cysteine 301–cysteine 322. Asparagine 337 carries an N-linked (GlcNAc...) asparagine glycan.

This sequence belongs to the aggrecan/versican proteoglycan family. In terms of tissue distribution, central nervous system.

It localises to the secreted. The protein localises to the extracellular space. The protein resides in the extracellular matrix. Functionally, may play a role in the terminally differentiating and the adult nervous system during postnatal development. Could stabilize interactions between hyaluronan (HA) and brain proteoglycans. This Felis catus (Cat) protein is Brevican core protein (BCAN).